A 493-amino-acid chain; its full sequence is EGF-containing fibulin-like extracellular matrix protein 1 (493 aa).

The N-terminal stretch at Met1–Ser17 is a signal peptide. An EGF-like 1; atypical domain is found at Tyr26–Leu71. An EGF-like 2; calcium-binding domain is found at Asp173 to Val213. 15 cysteine pairs are disulfide-bonded: Cys177-Cys190, Cys184-Cys199, Cys201-Cys212, Cys218-Cys228, Cys224-Cys237, Cys239-Cys252, Cys258-Cys268, Cys264-Cys277, Cys279-Cys292, Cys298-Cys309, Cys305-Cys318, Cys320-Cys332, Cys338-Cys350, Cys344-Cys359, and Cys365-Cys377. One can recognise an EGF-like 3; calcium-binding domain in the interval Asp214–Val253. The N-linked (GlcNAc...) asparagine glycan is linked to Asn249. One can recognise an EGF-like 4; calcium-binding domain in the interval Asp254–Glu293. The interval Asp259–Phe493 is mediates interaction with TIMP3. Positions Asp294–Gln333 constitute an EGF-like 5; calcium-binding domain. Positions Asp334–Val378 constitute an EGF-like 6; calcium-binding domain.

Belongs to the fibulin family. As to quaternary structure, interacts with ECM1. Interacts with TIMP3.

Its subcellular location is the secreted. The protein resides in the extracellular space. It is found in the extracellular matrix. In terms of biological role, binds EGFR, the EGF receptor, inducing EGFR autophosphorylation and the activation of downstream signaling pathways. May play a role in cell adhesion and migration. May function as a negative regulator of chondrocyte differentiation. In the olfactory epithelium, it may regulate glial cell migration, differentiation and the ability of glial cells to support neuronal neurite outgrowth. The chain is EGF-containing fibulin-like extracellular matrix protein 1 (EFEMP1) from Macaca fascicularis (Crab-eating macaque).